The sequence spans 434 residues: Alpha-enolase (434 aa).

Ser40 is a Mg(2+) binding site. Residues His158 and Glu167 each contribute to the substrate site. Glu210 acts as the Proton donor in catalysis. Positions 245, 293, and 318 each coordinate Mg(2+). Substrate-binding residues include Glu293 and Asp318. Lys343 acts as the Proton acceptor in catalysis. Substrate-binding positions include 370 to 373 (SHRS) and Lys394.

The protein belongs to the enolase family. In terms of assembly, homodimer. The cofactor is Mg(2+).

It is found in the cytoplasm. The enzyme catalyses (2R)-2-phosphoglycerate = phosphoenolpyruvate + H2O. The protein operates within carbohydrate degradation; glycolysis; pyruvate from D-glyceraldehyde 3-phosphate: step 4/5. The chain is Alpha-enolase (ENO1) from Gallus gallus (Chicken).